The primary structure comprises 518 residues: Protein FAM98A (518 aa).

Disordered regions lie at residues 297 to 415 (VLMG…GHSS) and 434 to 518 (GSGY…HYTS). The span at 302–311 (VPDRGGRPNE) shows a compositional bias: basic and acidic residues. 3 stretches are compositionally biased toward gly residues: residues 349–364 (GGRGGHEQGGGRGGRG), 383–396 (WTDGGSGGGGGYQD), and 405–415 (QPGGYHGGHSS). The span at 447–459 (RYQDGGHHGDRGG) shows a compositional bias: basic and acidic residues. Positions 460–484 (GRGGRGGRGGRGGRAGQGGGWGGRG) are enriched in gly residues. The segment covering 488–504 (YHQGGQFEQHFQHGGYQ) has biased composition (low complexity). The segment covering 505–518 (YNHSGFGQGRHYTS) has biased composition (polar residues).

The protein belongs to the FAM98 family. In terms of assembly, interacts (via N- and C-terminus) with DDX1. Interacts (via N- and C-terminus) with C14orf166. Interacts with FAM98B. Interacts with PLEKHM1 (via N- and C-terminus). As to expression, expressed strongly in colorectal cancer cells. Expressed strongly in colorectal cancer tissues compared to wild-type colon samples (at protein level). Expressed strongly in colorectal cancer tissues compared to wild-type colon samples.

Its function is as follows. Positively stimulates PRMT1-induced protein arginine methylation. Involved in skeletal homeostasis. Positively regulates lysosome peripheral distribution and ruffled border formation in osteoclasts. The chain is Protein FAM98A from Homo sapiens (Human).